A 303-amino-acid chain; its full sequence is Carboxypeptidase B (303 aa).

In terms of domain architecture, Peptidase M14 spans 5 to 298 (SYHDYDEINA…EGVKVVANFV (294 aa)). 2 residues coordinate Zn(2+): His-63 and Glu-66. Substrate-binding positions include 63–66 (HARE), Arg-118, and 136–137 (NR). Residue His-189 coordinates Zn(2+). Substrate contacts are provided by residues 190–191 (SY) and Tyr-241. Glu-264 functions as the Proton donor/acceptor in the catalytic mechanism.

It belongs to the peptidase M14 family. It depends on Zn(2+) as a cofactor.

The protein resides in the secreted. The enzyme catalyses Preferential release of a C-terminal lysine or arginine amino acid.. The sequence is that of Carboxypeptidase B from Astacus astacus (Noble crayfish).